The following is a 625-amino-acid chain: tRNA-guanine(15) transglycosylase (625 aa).

Catalysis depends on aspartate 86, which acts as the Nucleophile. Residues aspartate 121 and glycine 184 each coordinate substrate. Positions 546–621 (GLRVVVDDES…VAVKVHEGVN (76 aa)) constitute a PUA domain.

The protein belongs to the archaeosine tRNA-ribosyltransferase family. It depends on Zn(2+) as a cofactor.

The catalysed reaction is guanosine(15) in tRNA + 7-cyano-7-deazaguanine = 7-cyano-7-carbaguanosine(15) in tRNA + guanine. The protein operates within tRNA modification; archaeosine-tRNA biosynthesis. In terms of biological role, exchanges the guanine residue with 7-cyano-7-deazaguanine (preQ0) at position 15 in the dihydrouridine loop (D-loop) of archaeal tRNAs. The chain is tRNA-guanine(15) transglycosylase from Picrophilus torridus (strain ATCC 700027 / DSM 9790 / JCM 10055 / NBRC 100828 / KAW 2/3).